The chain runs to 178 residues: Large ribosomal subunit protein uL6 (178 aa).

This sequence belongs to the universal ribosomal protein uL6 family. As to quaternary structure, part of the 50S ribosomal subunit.

Its function is as follows. This protein binds to the 23S rRNA, and is important in its secondary structure. It is located near the subunit interface in the base of the L7/L12 stalk, and near the tRNA binding site of the peptidyltransferase center. In Helicobacter pylori (strain J99 / ATCC 700824) (Campylobacter pylori J99), this protein is Large ribosomal subunit protein uL6.